The sequence spans 559 residues: Potassium-transporting ATPase potassium-binding subunit (559 aa).

A run of 12 helical transmembrane segments spans residues 6–26 (FLLI…LGNV), 63–83 (LLAI…MLML), 131–151 (VGLT…IFAL), 173–193 (ITLW…IQQG), 253–273 (FVQM…FGDV), 283–303 (LLWA…WAEW), 327–347 (FGIL…CGAV), 356–376 (ALGG…FGGV), 379–399 (GLYG…LMIG), 416–436 (LTAL…ALAL), 484–504 (LLAF…MAIA), and 524–544 (GALF…LTFI).

The protein belongs to the KdpA family. The system is composed of three essential subunits: KdpA, KdpB and KdpC.

The protein localises to the cell inner membrane. In terms of biological role, part of the high-affinity ATP-driven potassium transport (or Kdp) system, which catalyzes the hydrolysis of ATP coupled with the electrogenic transport of potassium into the cytoplasm. This subunit binds the periplasmic potassium ions and delivers the ions to the membrane domain of KdpB through an intramembrane tunnel. This chain is Potassium-transporting ATPase potassium-binding subunit, found in Enterobacter sp. (strain 638).